The primary structure comprises 87 residues: UPF0386 protein RSKD131_0371 (87 aa).

It belongs to the UPF0386 family.

This is UPF0386 protein RSKD131_0371 from Cereibacter sphaeroides (strain KD131 / KCTC 12085) (Rhodobacter sphaeroides).